The chain runs to 421 residues: Imidazolonepropionase (421 aa).

His81 and His83 together coordinate Fe(3+). Residues His81 and His83 each coordinate Zn(2+). Residues Arg90, Tyr153, and His186 each contribute to the 4-imidazolone-5-propanoate site. Tyr153 provides a ligand contact to N-formimidoyl-L-glutamate. His251 is a Fe(3+) binding site. A Zn(2+)-binding site is contributed by His251. Glu254 serves as a coordination point for 4-imidazolone-5-propanoate. Asp326 is a Fe(3+) binding site. A Zn(2+)-binding site is contributed by Asp326. The N-formimidoyl-L-glutamate site is built by Asn328 and Gly330. Position 331 (Ser331) interacts with 4-imidazolone-5-propanoate.

Belongs to the metallo-dependent hydrolases superfamily. HutI family. The cofactor is Zn(2+). Fe(3+) serves as cofactor.

Its subcellular location is the cytoplasm. The enzyme catalyses 4-imidazolone-5-propanoate + H2O = N-formimidoyl-L-glutamate. The protein operates within amino-acid degradation; L-histidine degradation into L-glutamate; N-formimidoyl-L-glutamate from L-histidine: step 3/3. Catalyzes the hydrolytic cleavage of the carbon-nitrogen bond in imidazolone-5-propanoate to yield N-formimidoyl-L-glutamate. It is the third step in the universal histidine degradation pathway. The protein is Imidazolonepropionase of Streptococcus pyogenes serotype M4 (strain MGAS10750).